Reading from the N-terminus, the 254-residue chain is 5'-nucleotidase SurE (254 aa).

Positions 8, 9, 38, and 91 each coordinate a divalent metal cation.

It belongs to the SurE nucleotidase family. A divalent metal cation serves as cofactor.

The protein resides in the cytoplasm. It carries out the reaction a ribonucleoside 5'-phosphate + H2O = a ribonucleoside + phosphate. Its function is as follows. Nucleotidase that shows phosphatase activity on nucleoside 5'-monophosphates. In Anaeromyxobacter dehalogenans (strain 2CP-1 / ATCC BAA-258), this protein is 5'-nucleotidase SurE.